Reading from the N-terminus, the 209-residue chain is Xanthine phosphoribosyltransferase 1 (209 aa).

Position 79 is a phosphoserine (Ser79).

The protein resides in the cytoplasm. Functionally, may act as a xanthine phosphoribosyltransferase involved in the synthesis of purine nucleotides. Such activity is however unclear in vivo. The polypeptide is Xanthine phosphoribosyltransferase 1 (XPT1) (Saccharomyces cerevisiae (strain ATCC 204508 / S288c) (Baker's yeast)).